Reading from the N-terminus, the 220-residue chain is Inner membrane-spanning protein YciB (220 aa).

Helical transmembrane passes span 20-40, 57-77, 86-106, 123-143, 156-176, and 187-207; these read EVPP…FFFA, IGAP…IALA, LPIM…LTLW, LFGG…GYVF, KLTL…EIVW, and FKVW…MPLI.

The protein belongs to the YciB family.

The protein resides in the cell inner membrane. In terms of biological role, plays a role in cell envelope biogenesis, maintenance of cell envelope integrity and membrane homeostasis. This chain is Inner membrane-spanning protein YciB, found in Brucella melitensis biotype 2 (strain ATCC 23457).